A 355-amino-acid polypeptide reads, in one-letter code: MGCTVSAEDKAAAERSKMIDKNLREDGEKAAREVKLLLLGAGESGKSTIVKQMKIIHEDGYSEEECRQYRAVVYSNTIQSIMAIVKAMGNLQIDFADPQRADDARQLFALSCAAEEQGMLPEDLSGVIRRLWADHGVQACFGRSREYQLNDSAAYYLNDLERIAQSDYIPTQQDVLRTRVKTTGIVETHFTFKDLHFKMFDVGGQRSERKKWIHCFEGVTAIIFCVALSAYDLVLAEDEEMNRMHESMKLFDSICNNKWFTDTSIILFLNKKDLFEEKITQSSLTICFPEYTGANKYDEAASYIQSKFEDLNKRKDTKEIYTHFTCATDTKNVQFVFDAVTDVIIKNNLKDCGLF.

Glycine 2 is lipidated: N-myristoyl glycine. Residue cysteine 3 is the site of S-palmitoyl cysteine attachment. One can recognise a G-alpha domain in the interval 32–355 (REVKLLLLGA…KNNLKDCGLF (324 aa)). The interval 35–48 (KLLLLGAGESGKST) is G1 motif. GTP-binding positions include 40–47 (GAGESGKS), 176–182 (LRTRVKT), 201–205 (DVGGQ), 270–273 (NKKD), and alanine 327. Residues serine 47 and threonine 182 each contribute to the Mg(2+) site. Residues 174–182 (DVLRTRVKT) are G2 motif. The segment at 197–206 (FKMFDVGGQR) is G3 motif. Positions 266-273 (ILFLNKKD) are G4 motif. Residues 325–330 (TCATDT) are G5 motif.

Belongs to the G-alpha family. G(i/o/t/z) subfamily. As to quaternary structure, g proteins are composed of 3 units; alpha, beta and gamma. The alpha chain contains the guanine nucleotide binding site. In this context, interacts with GNB2. Interacts with UNC5B. Interacts with GPSM1. Interacts with RGS12 and RGS14. Interacts (inactive GDP-bound form) with NUCB1 (via GBA motif); the interaction leads to activation of GNAI3. Interacts (inactive GDP-bound form) with CCDC88C/DAPLE (via GBA motif). Interacts (inactive GDP-bound form) with CCDC8A/GIV (via GBA motif). Interacts with CXCR1 and CXCR2.

Its subcellular location is the cytoplasm. It is found in the cytoskeleton. The protein resides in the microtubule organizing center. The protein localises to the centrosome. It localises to the cell membrane. Its subcellular location is the membrane. Guanine nucleotide-binding proteins (G proteins) are involved as modulators or transducers in various transmembrane signaling systems. The G(i) proteins are involved in hormonal regulation of adenylate cyclase: they inhibit the cyclase in response to beta-adrenergic stimuli. May play a role in cell division. The protein is Guanine nucleotide-binding protein G(i) subunit alpha-2 (Gnai2) of Mus musculus (Mouse).